The following is a 385-amino-acid chain: FAD-dependent monooxygenase verC2 (385 aa).

FAD-binding residues include R27, D227, and A240. An N-linked (GlcNAc...) asparagine glycan is attached at N320. Residues 365 to 385 (WKTTIMFIALLTIVVLIYSFI) traverse the membrane as a helical segment.

Belongs to the paxM FAD-dependent monooxygenase family. FAD is required as a cofactor.

The protein resides in the membrane. It participates in secondary metabolite biosynthesis; terpenoid biosynthesis. It functions in the pathway mycotoxin biosynthesis. Its function is as follows. FAD-dependent monooxygenase; part of the gene cluster that mediates the biosynthesis of the neurotoxin verrucosidin, a methylated alpha-pyrone polyketide that inhibits oxidative phosphorylation in mitochondria and thereby causes neurological diseases. The carbon backbone of verrucosidin is synthesized by the HR-PKS verA, and further modified by the other verrucodidin cluster enzymes. The protein is FAD-dependent monooxygenase verC2 of Penicillium polonicum.